The following is a 396-amino-acid chain: Argininosuccinate synthase (396 aa).

Residue 9–17 coordinates ATP; the sequence is AFSGGLDTT. Residue Tyr-86 participates in L-citrulline binding. Residue Gly-116 participates in ATP binding. Positions 118, 122, and 123 each coordinate L-aspartate. Asn-122 is an L-citrulline binding site. L-citrulline-binding residues include Arg-126, Ser-172, Ser-181, Glu-254, and Tyr-266.

It belongs to the argininosuccinate synthase family. Type 1 subfamily. Homotetramer.

The protein resides in the cytoplasm. It catalyses the reaction L-citrulline + L-aspartate + ATP = 2-(N(omega)-L-arginino)succinate + AMP + diphosphate + H(+). It functions in the pathway amino-acid biosynthesis; L-arginine biosynthesis; L-arginine from L-ornithine and carbamoyl phosphate: step 2/3. The sequence is that of Argininosuccinate synthase from Halobacterium salinarum (strain ATCC 700922 / JCM 11081 / NRC-1) (Halobacterium halobium).